We begin with the raw amino-acid sequence, 77 residues long: Small ribosomal subunit protein uS17 (77 aa).

The protein belongs to the universal ribosomal protein uS17 family. As to quaternary structure, part of the 30S ribosomal subunit.

One of the primary rRNA binding proteins, it binds specifically to the 5'-end of 16S ribosomal RNA. The polypeptide is Small ribosomal subunit protein uS17 (Rickettsia canadensis (strain McKiel)).